The following is a 672-amino-acid chain: Poly-beta-1,6-N-acetyl-D-glucosamine N-deacetylase (672 aa).

The signal sequence occupies residues 1 to 20 (MLRNGNKYLLMLVSIIMLTA). The N-palmitoyl cysteine moiety is linked to residue C21. A lipid anchor (S-diacylglycerol cysteine) is attached at C21. Positions 107–349 (KAVVLTFDDG…IQRVKDMQIS (243 aa)) constitute a NodB homology domain.

The protein belongs to the polysaccharide deacetylase family.

The protein localises to the cell outer membrane. Functionally, catalyzes the N-deacetylation of poly-beta-1,6-N-acetyl-D-glucosamine (PGA), a biofilm adhesin polysaccharide. N-deacetylation promotes PGA export through the PgaA porin. The polypeptide is Poly-beta-1,6-N-acetyl-D-glucosamine N-deacetylase (pgaB) (Escherichia coli O157:H7).